A 47-amino-acid polypeptide reads, in one-letter code: uncharacterized protein (47 aa).

A disordered region spans residues 19–47; sequence EKVLKNQNPDRLSHMTDKNAQPKSKEKEE.

This is an uncharacterized protein from Bacillus subtilis (strain 168).